Consider the following 305-residue polypeptide: UPF0282 protein Tneu_0934 (305 aa).

It belongs to the UPF0282 family.

The sequence is that of UPF0282 protein Tneu_0934 from Pyrobaculum neutrophilum (strain DSM 2338 / JCM 9278 / NBRC 100436 / V24Sta) (Thermoproteus neutrophilus).